Consider the following 1546-residue polypeptide: Lysophospholipase NTE1 (1546 aa).

Residues 1-45 (MKDSTEALNSIAFAVDTTLSSILPSSLAPPSAPPATSSFLKSIWY) lie on the Cytoplasmic side of the membrane. Residues 46 to 66 (AFWWLWSMVVFKIMNIILLYI) traverse the membrane as a helical segment. Residues 67–81 (PSKIMNALSINFEIT) lie on the Lumenal side of the membrane. Residues 82-102 (LNLSSILVALSAIITVCFLVV) form a helical membrane-spanning segment. The Cytoplasmic portion of the chain corresponds to 103–1546 (RYKYLTGYSK…KKVLYRRNSI (1444 aa)). Residues 689–820 (PTEF…LKKL) and 816–965 (KLKK…VASK) contribute to the a nucleoside 3',5'-cyclic phosphate site. Positions 1239–1403 (LVLGGGGSRG…LDNLPVSEMK (165 aa)) constitute a PNPLA domain. Residues 1243–1248 (GGGSRG) carry the GXGXXG motif. A GXSXG motif is present at residues 1270–1274 (GTSIG). Serine 1272 (nucleophile) is an active-site residue. The Proton acceptor role is filled by aspartate 1390. Positions 1390-1392 (DGG) match the DGA/G motif.

The protein belongs to the NTE family.

The protein localises to the endoplasmic reticulum membrane. The catalysed reaction is a 1-acyl-sn-glycero-3-phosphocholine + H2O = sn-glycerol 3-phosphocholine + a fatty acid + H(+). With respect to regulation, inhibited by organophosphorus esters. Its function is as follows. Intracellular phospholipase B that catalyzes the double deacylation of phosphatidylcholine (PC) to glycerophosphocholine (GroPCho). Plays an important role in membrane lipid homeostasis. Responsible for the rapid PC turnover in response to inositol, elevated temperatures, or when choline is present in the growth medium. The protein is Lysophospholipase NTE1 (NTE1) of Scheffersomyces stipitis (strain ATCC 58785 / CBS 6054 / NBRC 10063 / NRRL Y-11545) (Yeast).